The following is a 186-amino-acid chain: uncharacterized protein (186 aa).

Disordered regions lie at residues 17-47 (LSGE…EETF), 77-105 (EDKL…AAEA), and 121-164 (QQAA…PVAG). Over residues 90–105 (PLAARPPSQAAAAAEA) the composition is skewed to low complexity. Residues 136–149 (PEPDPEPADEAAEE) show a composition bias toward acidic residues.

This is an uncharacterized protein from Homo sapiens (Human).